We begin with the raw amino-acid sequence, 147 residues long: Protein MioC (147 aa).

Residues 4 to 143 (ITLISGSTLG…PAEEWLGSWV (140 aa)) enclose the Flavodoxin-like domain.

It belongs to the flavodoxin family. MioC subfamily. As to quaternary structure, homodimer. The cofactor is FMN.

Probable electron transporter required for biotin synthase activity. The polypeptide is Protein MioC (mioC) (Escherichia coli (strain K12)).